The primary structure comprises 261 residues: Putative ankyrin repeat protein L99 (261 aa).

7 ANK repeats span residues 21 to 50 (KVNP…DVHA), 51 to 80 (HEDY…NIHS), 81 to 110 (DRDL…NVNA), 112 to 140 (QNSA…NIHA), 142 to 170 (NNFC…DINA), 171 to 203 (DNGA…IDNC), and 231 to 259 (NELK…NINS).

This is Putative ankyrin repeat protein L99 from Acanthamoeba polyphaga (Amoeba).